The primary structure comprises 343 residues: Holliday junction branch migration complex subunit RuvB (343 aa).

The tract at residues methionine 1–tyrosine 178 is large ATPase domain (RuvB-L). Residues leucine 17, arginine 18, glycine 59, lysine 62, threonine 63, threonine 64, glutamate 125–tyrosine 127, arginine 168, tyrosine 178, and arginine 215 contribute to the ATP site. Threonine 63 is a Mg(2+) binding site. The tract at residues threonine 179–glutamate 249 is small ATPAse domain (RuvB-S). The head domain (RuvB-H) stretch occupies residues lysine 252–serine 343. DNA contacts are provided by arginine 307 and arginine 312.

This sequence belongs to the RuvB family. As to quaternary structure, homohexamer. Forms an RuvA(8)-RuvB(12)-Holliday junction (HJ) complex. HJ DNA is sandwiched between 2 RuvA tetramers; dsDNA enters through RuvA and exits via RuvB. An RuvB hexamer assembles on each DNA strand where it exits the tetramer. Each RuvB hexamer is contacted by two RuvA subunits (via domain III) on 2 adjacent RuvB subunits; this complex drives branch migration. In the full resolvosome a probable DNA-RuvA(4)-RuvB(12)-RuvC(2) complex forms which resolves the HJ.

It is found in the cytoplasm. The catalysed reaction is ATP + H2O = ADP + phosphate + H(+). The RuvA-RuvB-RuvC complex processes Holliday junction (HJ) DNA during genetic recombination and DNA repair, while the RuvA-RuvB complex plays an important role in the rescue of blocked DNA replication forks via replication fork reversal (RFR). RuvA specifically binds to HJ cruciform DNA, conferring on it an open structure. The RuvB hexamer acts as an ATP-dependent pump, pulling dsDNA into and through the RuvAB complex. RuvB forms 2 homohexamers on either side of HJ DNA bound by 1 or 2 RuvA tetramers; 4 subunits per hexamer contact DNA at a time. Coordinated motions by a converter formed by DNA-disengaged RuvB subunits stimulates ATP hydrolysis and nucleotide exchange. Immobilization of the converter enables RuvB to convert the ATP-contained energy into a lever motion, pulling 2 nucleotides of DNA out of the RuvA tetramer per ATP hydrolyzed, thus driving DNA branch migration. The RuvB motors rotate together with the DNA substrate, which together with the progressing nucleotide cycle form the mechanistic basis for DNA recombination by continuous HJ branch migration. Branch migration allows RuvC to scan DNA until it finds its consensus sequence, where it cleaves and resolves cruciform DNA. In Pseudothermotoga lettingae (strain ATCC BAA-301 / DSM 14385 / NBRC 107922 / TMO) (Thermotoga lettingae), this protein is Holliday junction branch migration complex subunit RuvB.